The chain runs to 286 residues: GTP cyclohydrolase 1 type 2 homolog (286 aa).

Positions 66, 67, 103, 254, and 258 each coordinate a divalent metal cation.

Belongs to the GTP cyclohydrolase I type 2/NIF3 family. In terms of assembly, homohexamer.

The chain is GTP cyclohydrolase 1 type 2 homolog from Treponema pallidum (strain Nichols).